Consider the following 439-residue polypeptide: Trigger factor (439 aa).

The PPIase FKBP-type domain occupies 162-247 (GDRLTLDFIG…LKKVEAMILP (86 aa)).

This sequence belongs to the FKBP-type PPIase family. Tig subfamily.

Its subcellular location is the cytoplasm. It catalyses the reaction [protein]-peptidylproline (omega=180) = [protein]-peptidylproline (omega=0). In terms of biological role, involved in protein export. Acts as a chaperone by maintaining the newly synthesized protein in an open conformation. Functions as a peptidyl-prolyl cis-trans isomerase. The protein is Trigger factor of Dichelobacter nodosus (strain VCS1703A).